Here is a 33-residue protein sequence, read N- to C-terminus: Photosystem II reaction center protein Psb30 (33 aa).

Residues 5–25 (LIVQLTSLILISIAGPIIIAL) form a helical membrane-spanning segment.

Belongs to the Psb30/Ycf12 family. PSII is composed of 1 copy each of membrane proteins PsbA, PsbB, PsbC, PsbD, PsbE, PsbF, PsbH, PsbI, PsbJ, PsbK, PsbL, PsbM, PsbT, PsbY, PsbZ, Psb30/Ycf12, peripheral proteins of the oxygen-evolving complex and a large number of cofactors. It forms dimeric complexes.

The protein localises to the plastid. It is found in the chloroplast thylakoid membrane. Its function is as follows. A core subunit of photosystem II (PSII), probably helps stabilize the reaction center. The sequence is that of Photosystem II reaction center protein Psb30 from Euglena myxocylindracea.